Here is a 627-residue protein sequence, read N- to C-terminus: Polyadenylate-binding protein, cytoplasmic and nuclear (627 aa).

Over residues 1 to 11 the composition is skewed to polar residues; it reads MSAADANQVQE. Positions 1-46 are disordered; sequence MSAADANQVQESLEKLNLDSAPVASTEETEQTASGETEEAADSAQV. RRM domains are found at residues 51–129, 139–216, 232–309, and 335–412; these read ASLY…WSQR, GNIF…KHIS, TNVY…RAQK, and VNLF…LAQR. A compositionally biased stretch (low complexity) spans 511–535; it reads DFNNGANGGRQQRGYYPNRNQNQKG. The segment at 511–537 is disordered; the sequence is DFNNGANGGRQQRGYYPNRNQNQKGRQ. Residues 537-618 enclose the PABC domain; it reads QQKDLAAIIA…ALTAFEEYKK (82 aa).

The protein belongs to the polyadenylate-binding protein type-1 family.

It localises to the cytoplasm. The protein localises to the nucleus. Its function is as follows. Binds the poly(A) tail of mRNA. Appears to be an important mediator of the multiple roles of the poly(A) tail in mRNA biogenesis, stability and translation. In the nucleus, involved in both mRNA cleavage and polyadenylation. Is also required for efficient mRNA export to the cytoplasm. Acts in concert with a poly(A)-specific nuclease (PAN) to affect poly(A) tail shortening, which may occur concomitantly with either nucleocytoplasmic mRNA transport or translational initiation. In the cytoplasm, stimulates translation initiation and regulates mRNA decay through translation termination-coupled poly(A) shortening, probably mediated by PAN. This is Polyadenylate-binding protein, cytoplasmic and nuclear (PAB1) from Debaryomyces hansenii (strain ATCC 36239 / CBS 767 / BCRC 21394 / JCM 1990 / NBRC 0083 / IGC 2968) (Yeast).